The sequence spans 503 residues: Maturase K (503 aa).

The protein belongs to the intron maturase 2 family. MatK subfamily.

It localises to the plastid. Its subcellular location is the chloroplast. Its function is as follows. Usually encoded in the trnK tRNA gene intron. Probably assists in splicing its own and other chloroplast group II introns. The sequence is that of Maturase K from Rosa rugosa (Rugosa rose).